The sequence spans 239 residues: Large ribosomal subunit protein uL2 (239 aa).

Disordered stretches follow at residues Met1–Pro20 and Pro203–Lys239. Positions Pro222–Lys239 are enriched in basic residues.

The protein belongs to the universal ribosomal protein uL2 family. In terms of assembly, part of the 50S ribosomal subunit. Forms a bridge to the 30S subunit in the 70S ribosome.

Functionally, one of the primary rRNA binding proteins. Required for association of the 30S and 50S subunits to form the 70S ribosome, for tRNA binding and peptide bond formation. It has been suggested to have peptidyltransferase activity; this is somewhat controversial. Makes several contacts with the 16S rRNA in the 70S ribosome. The polypeptide is Large ribosomal subunit protein uL2 (Pyrococcus horikoshii (strain ATCC 700860 / DSM 12428 / JCM 9974 / NBRC 100139 / OT-3)).